The primary structure comprises 262 residues: Shikimate dehydrogenase (NADP(+)) (262 aa).

Shikimate is bound by residues 15–17 (SRS) and threonine 62. Lysine 66 functions as the Proton acceptor in the catalytic mechanism. Residue glutamate 78 coordinates NADP(+). Shikimate contacts are provided by asparagine 87 and aspartate 102. NADP(+) is bound by residues 126–130 (GAGGA), 150–155 (NRTLAR), and methionine 214. Position 216 (tyrosine 216) interacts with shikimate. Glycine 236 serves as a coordination point for NADP(+).

This sequence belongs to the shikimate dehydrogenase family. Homodimer.

The catalysed reaction is shikimate + NADP(+) = 3-dehydroshikimate + NADPH + H(+). It participates in metabolic intermediate biosynthesis; chorismate biosynthesis; chorismate from D-erythrose 4-phosphate and phosphoenolpyruvate: step 4/7. Its function is as follows. Involved in the biosynthesis of the chorismate, which leads to the biosynthesis of aromatic amino acids. Catalyzes the reversible NADPH linked reduction of 3-dehydroshikimate (DHSA) to yield shikimate (SA). This is Shikimate dehydrogenase (NADP(+)) from Acinetobacter baumannii (strain AB307-0294).